The following is a 335-amino-acid chain: tRNA N6-adenosine threonylcarbamoyltransferase (335 aa).

Histidine 110 and histidine 114 together coordinate Fe cation. Residues 132 to 136 (LVSGG), aspartate 165, glycine 178, and asparagine 271 contribute to the substrate site. Aspartate 299 is a binding site for Fe cation.

It belongs to the KAE1 / TsaD family. It depends on Fe(2+) as a cofactor.

The protein resides in the cytoplasm. The enzyme catalyses L-threonylcarbamoyladenylate + adenosine(37) in tRNA = N(6)-L-threonylcarbamoyladenosine(37) in tRNA + AMP + H(+). In terms of biological role, required for the formation of a threonylcarbamoyl group on adenosine at position 37 (t(6)A37) in tRNAs that read codons beginning with adenine. Is involved in the transfer of the threonylcarbamoyl moiety of threonylcarbamoyl-AMP (TC-AMP) to the N6 group of A37, together with TsaE and TsaB. TsaD likely plays a direct catalytic role in this reaction. In Campylobacter jejuni subsp. jejuni serotype O:2 (strain ATCC 700819 / NCTC 11168), this protein is tRNA N6-adenosine threonylcarbamoyltransferase.